Consider the following 70-residue polypeptide: Turripeptide Ici9.2 (70 aa).

A signal peptide spans 1–20 (MKVYCLLLVLLVGLVSQAQG). The Kazal-like domain occupies 21-70 (QLDKKCQTMCTMEYLPVCGSDGTTYPNKCTLTSTACVNQMDITVLHNGEC). Disulfide bonds link cysteine 26-cysteine 56, cysteine 30-cysteine 49, and cysteine 38-cysteine 70.

It belongs to the conopeptide P-like superfamily. As to expression, expressed by the venom duct.

It is found in the secreted. Functionally, acts as a neurotoxin by inhibiting an ion channel. May also act as a serine protease inhibitor, since it possess the kazal serine protease inhibitor signature. The protein is Turripeptide Ici9.2 of Iotyrris cingulifera (Sea snail).